The sequence spans 349 residues: Protein-glutamate methylesterase/protein-glutamine glutaminase (349 aa).

Residues 2-118 form the Response regulatory domain; the sequence is RVLVVDDSAL…VDLSSVAQEL (117 aa). Aspartate 52 carries the 4-aspartylphosphate modification. In terms of domain architecture, CheB-type methylesterase spans 159-345; sequence VLIGSSTGGP…EEIVRFLEVK (187 aa). Active-site residues include serine 164, histidine 191, and aspartate 287.

This sequence belongs to the CheB family. In terms of processing, phosphorylated by CheA. Phosphorylation of the N-terminal regulatory domain activates the methylesterase activity.

It localises to the cytoplasm. The catalysed reaction is [protein]-L-glutamate 5-O-methyl ester + H2O = L-glutamyl-[protein] + methanol + H(+). It catalyses the reaction L-glutaminyl-[protein] + H2O = L-glutamyl-[protein] + NH4(+). Functionally, involved in chemotaxis. Part of a chemotaxis signal transduction system that modulates chemotaxis in response to various stimuli. Catalyzes the demethylation of specific methylglutamate residues introduced into the chemoreceptors (methyl-accepting chemotaxis proteins or MCP) by CheR. Also mediates the irreversible deamidation of specific glutamine residues to glutamic acid. The sequence is that of Protein-glutamate methylesterase/protein-glutamine glutaminase from Archaeoglobus fulgidus (strain ATCC 49558 / DSM 4304 / JCM 9628 / NBRC 100126 / VC-16).